We begin with the raw amino-acid sequence, 252 residues long: uncharacterized protein (252 aa).

Residues 1–22 form the signal peptide; it reads MIHSKRLRLWLYLVLLAVFISA. Cys-23 carries the N-palmitoyl cysteine lipid modification. Cys-23 carries the S-diacylglycerol cysteine lipid modification.

The protein belongs to the staphylococcal tandem lipoprotein family.

Its subcellular location is the cell membrane. This is an uncharacterized protein from Staphylococcus aureus (strain MW2).